The following is a 461-amino-acid chain: Argininosuccinate lyase (461 aa).

It belongs to the lyase 1 family. Argininosuccinate lyase subfamily.

It is found in the cytoplasm. The enzyme catalyses 2-(N(omega)-L-arginino)succinate = fumarate + L-arginine. It functions in the pathway amino-acid biosynthesis; L-arginine biosynthesis; L-arginine from L-ornithine and carbamoyl phosphate: step 3/3. This Aeromonas hydrophila subsp. hydrophila (strain ATCC 7966 / DSM 30187 / BCRC 13018 / CCUG 14551 / JCM 1027 / KCTC 2358 / NCIMB 9240 / NCTC 8049) protein is Argininosuccinate lyase.